We begin with the raw amino-acid sequence, 862 residues long: Solute carrier family 4 member 11 (862 aa).

The Cytoplasmic portion of the chain corresponds to 1 to 343; the sequence is MSQNEHCQDS…IIGKSKSVGK (343 aa). The chain crosses the membrane as a helical span at residues 344-366; that stretch reads YVTTTLFLYFACLLPTIAFGSLN. At 367-379 the chain is on the extracellular side; sequence DENTNGAIDVQKT. The chain crosses the membrane as a helical span at residues 380–393; sequence IAGQSIGGLLYALF. Residues 394-398 lie on the Cytoplasmic side of the membrane; that stretch reads SGQPL. The helical transmembrane segment at 399–415 threads the bilayer; that stretch reads VILLTTAPLAIYTQVIR. The Extracellular portion of the chain corresponds to 416-428; that stretch reads VICDDYNLDFNAF. The helical transmembrane segment at 429–452 threads the bilayer; that stretch reads YAWTGLWNSFFLALYAFLNLSLLM. Residues 453-460 lie on the Cytoplasmic side of the membrane; sequence NLFKRSTE. Residues 461 to 481 traverse the membrane as a helical segment; that stretch reads EIIALFISITFVLDAVKGMVK. Residues 482 to 542 lie on the Extracellular side of the membrane; the sequence is IFGKYYYGHH…SSPGSTHSGQ (61 aa). N511 and N519 each carry an N-linked (GlcNAc...) asparagine glycan. The chain crosses the membrane as a helical span at residues 543–564; that stretch reads ATAVLSLLIMLGTLWLGYTLYQ. Over 565–577 the chain is Cytoplasmic; sequence FKKSPYLHPCVRE. A helical transmembrane segment spans residues 578–599; it reads TLSDCALPIAVLSFSLIGSYGF. Residues 600 to 627 are Extracellular-facing; the sequence is QEIEMSKFRYNPSESLFEVAQIHSLSFK. Residues 628-645 form a helical membrane-spanning segment; that stretch reads AIGSAMGLGFLLSLLFFI. The Cytoplasmic segment spans residues 646 to 670; it reads EQNLVAALVNAPENRLVKGTAYHWD. The helical transmembrane segment at 671–691 threads the bilayer; the sequence is LLLLAIINTGLSLFGLPWIHA. Residues 692-721 are Extracellular-facing; that stretch reads AYPHSPLHVRALALVEERVENGHIYETIVD. The chain crosses the membrane as a helical span at residues 722-746; the sequence is VKETRLTALGASVLVGLSLLLLPFP. At 747 to 752 the chain is on the cytoplasmic side; sequence LQWIPK. The helical transmembrane segment at 753-770 threads the bilayer; sequence PVLYGLFLYIALTSLDGN. Over 771-774 the chain is Extracellular; the sequence is QLFS. The chain crosses the membrane as a helical span at residues 775 to 797; the sequence is RVALLLKEQTSYPPTHYIRRVPQ. The Cytoplasmic segment spans residues 798 to 802; the sequence is RKIHY. Residues 803 to 819 traverse the membrane as a helical segment; that stretch reads FTGLQILQLLLLCAFGM. Residues 820-823 lie on the Extracellular side of the membrane; sequence SSLP. The helical transmembrane segment at 824-844 threads the bilayer; the sequence is YMKMVFPLIMIAMIPIRYNLL. The Cytoplasmic portion of the chain corresponds to 845–862; that stretch reads PRIIEAKYLDVMDAEHRP.

Belongs to the anion exchanger (TC 2.A.31) family. Homodimer. In terms of processing, glycosylated. As to expression, expressed in the endothelial cells of the cornea. In the inner ear, is located in fibrocytes underlying the stria vascularis. In the kidney, is expressed in the thin descending limb of Henle loop.

It localises to the cell membrane. It is found in the basolateral cell membrane. The enzyme catalyses tetrahydroxoborate(in) + 2 Na(+)(in) = tetrahydroxoborate(out) + 2 Na(+)(out). Its function is as follows. Multifunctional transporter with an impact in cell morphology and differentiation. In the presence of borate B(OH)4(-), acts as a voltage-dependent electrogenic Na(+)-coupled B(OH)4(-) cotransporter controlling boron homeostasis. At early stages of stem cell differentiation, participates in synergy with ITGA5-ITGB1 and ITGAV-ITGB3 integrins and BMPR1A to promote cell adhesion and contractility that drives differentiation toward osteogenic commitment while inhibiting adipogenesis. In the absence of B(OH)4(-), acts as a Na(+)-coupled OH(-) or H(+) permeable channel with implications in cellular redox balance. Regulates the oxidative stress response in corneal endothelium by enhancing antioxidant defenses and protecting cells from reactive oxygen species. In response to hypo-osmotic challenge, also acts as water permeable channel at the basolateral cell membrane of corneal endothelial cells and facilitates transendothelial fluid reabsorption in the aqueous humor. In the presence of ammonia, acts as an electrogenic NH3/H(+) cotransporter and may play a role in ammonia transport and reabsorption in renal Henle's loop epithelium. This is Solute carrier family 4 member 11 (Slc4a11) from Mus musculus (Mouse).